A 342-amino-acid chain; its full sequence is Serpentine receptor class gamma-69 (342 aa).

7 consecutive transmembrane segments (helical) span residues 11–31 (MAGLIGIYAFQGFYGLLSVVV), 51–71 (SLLYTCCAALSLTYFLDHFLI), 106–126 (PIAILVFHALIAAHRFSIVAA), 140–160 (LFVLVGFLIPLIFMWFMIPCK), 191–211 (IAAVLFGVLTLCLTFGMLIAL), 222–242 (AEISLIVFEVFMTVFTLIYAF), and 269–289 (FAIDIFILPQAWTLLFLSTTV).

It belongs to the nematode receptor-like protein srg family.

It is found in the membrane. The polypeptide is Serpentine receptor class gamma-69 (srg-69) (Caenorhabditis elegans).